The sequence spans 388 residues: Purple acid phosphatase 19 (388 aa).

The N-terminal stretch at 1–24 (MGLNHLTLVCSAIALLSIFVVSQA) is a signal peptide. Residues N97 and N111 are each glycosylated (N-linked (GlcNAc...) asparagine). Fe cation contacts are provided by D145 and Y148. D145 contacts Zn(2+). A Zn(2+)-binding site is contributed by N182. Substrate is bound at residue N182. N226 carries N-linked (GlcNAc...) asparagine glycosylation. H238 contributes to the Zn(2+) binding site. The active-site Proton donor is the H248. H275 provides a ligand contact to Zn(2+). 275–277 (HVH) is a binding site for substrate. H277 contacts Fe cation. 2 N-linked (GlcNAc...) asparagine glycosylation sites follow: N291 and N348.

This sequence belongs to the metallophosphoesterase superfamily. Purple acid phosphatase family. In terms of assembly, homodimer. Fe cation is required as a cofactor. Zn(2+) serves as cofactor. Specifically expressed in flowers.

It is found in the secreted. It catalyses the reaction a phosphate monoester + H2O = an alcohol + phosphate. This chain is Purple acid phosphatase 19 (PAP19), found in Arabidopsis thaliana (Mouse-ear cress).